Here is a 263-residue protein sequence, read N- to C-terminus: Acetylglutamate kinase (263 aa).

Residues 48 to 49 (GG), Arg70, and Asn162 each bind substrate.

The protein belongs to the acetylglutamate kinase family. ArgB subfamily.

The protein localises to the cytoplasm. The catalysed reaction is N-acetyl-L-glutamate + ATP = N-acetyl-L-glutamyl 5-phosphate + ADP. The protein operates within amino-acid biosynthesis; L-arginine biosynthesis; N(2)-acetyl-L-ornithine from L-glutamate: step 2/4. Catalyzes the ATP-dependent phosphorylation of N-acetyl-L-glutamate. The sequence is that of Acetylglutamate kinase from Shewanella sediminis (strain HAW-EB3).